A 226-amino-acid chain; its full sequence is Ribose-5-phosphate isomerase A (226 aa).

Residues 29 to 32 (TGST), 84 to 87 (DGAD), and 97 to 100 (KGGG) contribute to the substrate site. Glu-106 functions as the Proton acceptor in the catalytic mechanism. Lys-124 contributes to the substrate binding site.

The protein belongs to the ribose 5-phosphate isomerase family. In terms of assembly, homodimer.

The enzyme catalyses aldehydo-D-ribose 5-phosphate = D-ribulose 5-phosphate. It participates in carbohydrate degradation; pentose phosphate pathway; D-ribose 5-phosphate from D-ribulose 5-phosphate (non-oxidative stage): step 1/1. Its function is as follows. Catalyzes the reversible conversion of ribose-5-phosphate to ribulose 5-phosphate. The chain is Ribose-5-phosphate isomerase A from Methanothermobacter thermautotrophicus (strain ATCC 29096 / DSM 1053 / JCM 10044 / NBRC 100330 / Delta H) (Methanobacterium thermoautotrophicum).